Consider the following 596-residue polypeptide: Protein NRT1/ PTR FAMILY 3.1 (596 aa).

The segment covering 1 to 16 (MEEQSKNKISEEEKQL) has biased composition (basic and acidic residues). The segment at 1 to 23 (MEEQSKNKISEEEKQLHGRPNRP) is disordered. The next 12 helical transmembrane spans lie at 27–47 (LITMPFIFANEICEKLAVVGF), 73–93 (FAGTSSLTPLLGAFIADSFAG), 98–118 (ITFASIIYQIGMTLLTISAII), 137–157 (TAQLSILYVALLLGALGSGGI), 185–205 (NWYYFCMGAAVLLAVTVLVWI), 213–233 (LGLGIPTVAMFLSVIAFVGGF), 334–354 (MGPIGASGILLITAYAQQGTF), 372–392 (IPAGSMSVFTTVAMLTTIIFY), 416–436 (MGIGFVISIIATLVAGFVEVK), 453–473 (IVPISFLWLIPQYGLHGVAEA), 497–517 (ALFWMAISIGNYVSTLLVTLV), and 542–562 (YFYWLITVLQAVNLVYYLWCA).

Belongs to the major facilitator superfamily. Proton-dependent oligopeptide transporter (POT/PTR) (TC 2.A.17) family. As to expression, expressed in shoots, stems, leaves, flowers and siliques.

The protein localises to the membrane. May act as an efflux-type nitrite transporter. Not regulated by the PII protein involved in the regulation of nitrite uptake into higher plant chloroplasts. The sequence is that of Protein NRT1/ PTR FAMILY 3.1 (NPF3.1) from Arabidopsis thaliana (Mouse-ear cress).